Here is a 642-residue protein sequence, read N- to C-terminus: Acid beta-fructofuranosidase (642 aa).

Topologically, residues 1–22 (MRNDSPYTPLLNASHNNHRRRE) are cytoplasmic. A propeptide spans 1–95 (MRNDSPYTPL…LSGNLVGEGG (95 aa)) (removed in mature form). The chain crosses the membrane as a helical; Signal-anchor for type II membrane protein span at residues 23–43 (LLLLFSGLLLLASIIAFSAYI). At 44 to 642 (AQPHADADVS…YHPDQKRQTS (599 aa)) the chain is on the lumenal side. A glycan (N-linked (GlcNAc...) asparagine) is linked at asparagine 100. Substrate contacts are provided by residues 119–122 (WMND), glutamine 138, tryptophan 146, 181–182 (WT), and 245–246 (RD). Aspartate 122 is an active-site residue. An N-linked (GlcNAc...) asparagine glycan is attached at asparagine 267. Substrate-binding residues include glutamate 300 and aspartate 333. A disulfide bridge connects residues cysteine 490 and cysteine 538. Asparagine 491 and asparagine 615 each carry an N-linked (GlcNAc...) asparagine glycan.

It belongs to the glycosyl hydrolase 32 family. In terms of assembly, may be present in two forms, a 70 kDa monomer and a heterodimer of the 30 kDa and 38 kDa subunits. The ratio of the levels of the two forms within cells appears to be regulated developmentally.

The protein resides in the membrane. It is found in the vacuole. The protein localises to the vacuole lumen. The enzyme catalyses Hydrolysis of terminal non-reducing beta-D-fructofuranoside residues in beta-D-fructofuranosides.. It functions in the pathway glycan biosynthesis; sucrose metabolism. The polypeptide is Acid beta-fructofuranosidase (VCINV) (Vicia faba (Broad bean)).